The primary structure comprises 257 residues: Ribonuclease HII (257 aa).

The RNase H type-2 domain occupies 70 to 257; it reads EFIAGIDEVG…PIKSMVAGGN (188 aa). Residues Asp76, Glu77, and Asp168 each coordinate a divalent metal cation.

Belongs to the RNase HII family. Mn(2+) serves as cofactor. It depends on Mg(2+) as a cofactor.

The protein resides in the cytoplasm. It carries out the reaction Endonucleolytic cleavage to 5'-phosphomonoester.. In terms of biological role, endonuclease that specifically degrades the RNA of RNA-DNA hybrids. The chain is Ribonuclease HII from Streptococcus suis (strain 98HAH33).